The primary structure comprises 345 residues: N-acetyl-gamma-glutamyl-phosphate reductase (345 aa).

Cysteine 153 is a catalytic residue.

It belongs to the NAGSA dehydrogenase family. Type 1 subfamily.

The protein localises to the cytoplasm. It catalyses the reaction N-acetyl-L-glutamate 5-semialdehyde + phosphate + NADP(+) = N-acetyl-L-glutamyl 5-phosphate + NADPH + H(+). It functions in the pathway amino-acid biosynthesis; L-arginine biosynthesis; N(2)-acetyl-L-ornithine from L-glutamate: step 3/4. In terms of biological role, catalyzes the NADPH-dependent reduction of N-acetyl-5-glutamyl phosphate to yield N-acetyl-L-glutamate 5-semialdehyde. This Methylacidiphilum infernorum (isolate V4) (Methylokorus infernorum (strain V4)) protein is N-acetyl-gamma-glutamyl-phosphate reductase.